The following is a 101-amino-acid chain: Iron-sulfur cluster assembly protein CyaY (101 aa).

This sequence belongs to the frataxin family.

Its function is as follows. Involved in iron-sulfur (Fe-S) cluster assembly. May act as a regulator of Fe-S biogenesis. The chain is Iron-sulfur cluster assembly protein CyaY from Actinobacillus pleuropneumoniae serotype 7 (strain AP76).